The following is a 350-amino-acid chain: MNALDIINLSKSFGAQTALDSINLSVPTGSRTVIVGPSGSGKTTLLRMIAGFEFPDAGSLMLNGQTLVDRTHAVPAYQRQIGYVPQDGALFPHMTVADNIGFGLAETGSARAERIQALMDNVALNADMATRWPHELSGGQQQRVSLARALAQRPRLMLLDEPFSALDTGLRGAMRKMVARLLEEAGVTTILVTHDQGEALSFADQLAVMRDGRLVQSGHPMDLYRYPNDEQTAHFLGDAVVMPARIEAGWAHCDLGRVMVNSNGFAGAAQIMLRPEQLQLSDIPADPDGCHAVVTDRDFGGNVCTLTVELRTQASPGRSLLVRSSGMHAPPAGSAVQLSILGAAHVFATP.

In terms of domain architecture, ABC transporter spans 4 to 236 (LDIINLSKSF…PNDEQTAHFL (233 aa)). ATP is bound at residue 36–43 (GPSGSGKT).

The protein belongs to the ABC transporter superfamily. Fe(3+) ion importer (TC 3.A.1.10) family. In terms of assembly, the complex is composed of two ATP-binding proteins (FbpC), two transmembrane proteins (FbpB) and a solute-binding protein (FbpA).

It is found in the cell inner membrane. The enzyme catalyses Fe(3+)(out) + ATP + H2O = Fe(3+)(in) + ADP + phosphate + H(+). Functionally, part of the ABC transporter complex FbpABC involved in Fe(3+) ions import. Responsible for energy coupling to the transport system. This Pseudomonas fluorescens (strain Pf0-1) protein is Fe(3+) ions import ATP-binding protein FbpC.